Here is a 208-residue protein sequence, read N- to C-terminus: Urease accessory protein UreE (208 aa).

The tract at residues 145 to 195 is disordered; sequence AEAHGHGQAHAHDHHDHDHHDHGHDHAHHDHAHHDHAHDHHGHDHAHDHAH.

It belongs to the UreE family.

The protein resides in the cytoplasm. Functionally, involved in urease metallocenter assembly. Binds nickel. Probably functions as a nickel donor during metallocenter assembly. The sequence is that of Urease accessory protein UreE from Azorhizobium caulinodans (strain ATCC 43989 / DSM 5975 / JCM 20966 / LMG 6465 / NBRC 14845 / NCIMB 13405 / ORS 571).